Reading from the N-terminus, the 245-residue chain is Type III pantothenate kinase (245 aa).

6 to 13 (DVGNTAMK) is an ATP binding site. Residues Y93 and 100–103 (GVDR) each bind substrate. D102 functions as the Proton acceptor in the catalytic mechanism. Residue D121 coordinates K(+). Residue S124 coordinates ATP. T175 is a binding site for substrate.

It belongs to the type III pantothenate kinase family. In terms of assembly, homodimer. NH4(+) serves as cofactor. Requires K(+) as cofactor.

The protein localises to the cytoplasm. The enzyme catalyses (R)-pantothenate + ATP = (R)-4'-phosphopantothenate + ADP + H(+). It participates in cofactor biosynthesis; coenzyme A biosynthesis; CoA from (R)-pantothenate: step 1/5. Catalyzes the phosphorylation of pantothenate (Pan), the first step in CoA biosynthesis. The polypeptide is Type III pantothenate kinase (Alcanivorax borkumensis (strain ATCC 700651 / DSM 11573 / NCIMB 13689 / SK2)).